Reading from the N-terminus, the 735-residue chain is Receptor-type guanylate cyclase gcy-27 (735 aa).

The N-linked (GlcNAc...) asparagine glycan is linked to Asn11. A helical membrane pass occupies residues 28 to 48 (FIICTLPVPIYFVVVAIWTIN). Residues 188-465 (ALTSRRRVFG…IENLRNAIAI (278 aa)) form the Protein kinase domain. The 131-residue stretch at 538 to 668 (TVMFVQICDF…DTVNFASRMQ (131 aa)) folds into the Guanylate cyclase domain.

It belongs to the adenylyl cyclase class-4/guanylyl cyclase family. Expressed bilaterally in ASK, ASI and ASJ sensory neurons.

The protein localises to the cell membrane. It carries out the reaction GTP = 3',5'-cyclic GMP + diphosphate. In terms of biological role, guanylate cyclase involved in the production of the second messenger cGMP. May be involved in sensitivity to quinine by regulating egl-4 activity through the production of cGMP. Promotes the calcium flux to the cytoplasm in ASJ sensory neurons upon removal of a nitric oxide (NO) stimulus and is thereby involved in the behavioral avoidance response to NO-producing organisms like P.aeruginosa. The chain is Receptor-type guanylate cyclase gcy-27 from Caenorhabditis elegans.